The sequence spans 350 residues: tRNA pseudouridine synthase D (350 aa).

Aspartate 79 acts as the Nucleophile in catalysis. A TRUD domain is found at 154–306 (GAPNYYGPQR…EQERRPIVLY (153 aa)).

This sequence belongs to the pseudouridine synthase TruD family.

It catalyses the reaction uridine(13) in tRNA = pseudouridine(13) in tRNA. Its function is as follows. Responsible for synthesis of pseudouridine from uracil-13 in transfer RNAs. This chain is tRNA pseudouridine synthase D, found in Pseudoalteromonas atlantica (strain T6c / ATCC BAA-1087).